The primary structure comprises 461 residues: Putative aldehyde dehydrogenase FUS7 (461 aa).

NAD(+) is bound at residue 220–225 (GSTATG). Active-site residues include Glu-242 and Cys-276.

This sequence belongs to the aldehyde dehydrogenase family.

The enzyme catalyses an aldehyde + NAD(+) + H2O = a carboxylate + NADH + 2 H(+). In terms of biological role, putative aldehyde dehydrogenase; part of the gene cluster that mediates the biosynthesis of the mycotoxin fusarin C. Within the cluster, FUS1, FUS2, FUS8 and FUS9 are sufficient for fusarin production. The other FUS cluster members are not essential for fusarin C biosynthesis. The protein is Putative aldehyde dehydrogenase FUS7 of Gibberella moniliformis (strain M3125 / FGSC 7600) (Maize ear and stalk rot fungus).